The sequence spans 295 residues: Small ribosomal subunit protein uS2 (295 aa).

This sequence belongs to the universal ribosomal protein uS2 family.

The chain is Small ribosomal subunit protein uS2 from Rickettsia canadensis (strain McKiel).